We begin with the raw amino-acid sequence, 128 residues long: Nascent polypeptide-associated complex protein (128 aa).

Positions 8-75 (PRMLKKMQKM…PKKIKKEKVE (68 aa)) constitute an NAC-A/B domain.

Belongs to the NAC-alpha family. Homodimer. Interacts with the ribosome. Binds ribosomal RNA.

Contacts the emerging nascent chain on the ribosome. This is Nascent polypeptide-associated complex protein from Methanocaldococcus jannaschii (strain ATCC 43067 / DSM 2661 / JAL-1 / JCM 10045 / NBRC 100440) (Methanococcus jannaschii).